A 666-amino-acid polypeptide reads, in one-letter code: DNA mismatch repair protein MutL (666 aa).

This sequence belongs to the DNA mismatch repair MutL/HexB family.

Its function is as follows. This protein is involved in the repair of mismatches in DNA. It is required for dam-dependent methyl-directed DNA mismatch repair. May act as a 'molecular matchmaker', a protein that promotes the formation of a stable complex between two or more DNA-binding proteins in an ATP-dependent manner without itself being part of a final effector complex. The chain is DNA mismatch repair protein MutL from Clostridium botulinum (strain 657 / Type Ba4).